We begin with the raw amino-acid sequence, 152 residues long: Xanthine-guanine phosphoribosyltransferase (152 aa).

Residues 37–38 (RG), arginine 69, and 88–96 (DDLVDTGGT) each bind 5-phospho-alpha-D-ribose 1-diphosphate. Arginine 69 lines the GMP pocket. Position 89 (aspartate 89) interacts with Mg(2+). Positions 92 and 135 each coordinate guanine. 2 residues coordinate xanthine: aspartate 92 and isoleucine 135. GMP contacts are provided by residues 92–96 (DTGGT) and 134–135 (WI).

This sequence belongs to the purine/pyrimidine phosphoribosyltransferase family. XGPT subfamily. As to quaternary structure, homotetramer. Mg(2+) is required as a cofactor.

The protein localises to the cell inner membrane. It catalyses the reaction GMP + diphosphate = guanine + 5-phospho-alpha-D-ribose 1-diphosphate. It carries out the reaction XMP + diphosphate = xanthine + 5-phospho-alpha-D-ribose 1-diphosphate. The catalysed reaction is IMP + diphosphate = hypoxanthine + 5-phospho-alpha-D-ribose 1-diphosphate. Its pathway is purine metabolism; GMP biosynthesis via salvage pathway; GMP from guanine: step 1/1. It functions in the pathway purine metabolism; XMP biosynthesis via salvage pathway; XMP from xanthine: step 1/1. In terms of biological role, purine salvage pathway enzyme that catalyzes the transfer of the ribosyl-5-phosphate group from 5-phospho-alpha-D-ribose 1-diphosphate (PRPP) to the N9 position of the 6-oxopurines guanine and xanthine to form the corresponding ribonucleotides GMP (guanosine 5'-monophosphate) and XMP (xanthosine 5'-monophosphate), with the release of PPi. To a lesser extent, also acts on hypoxanthine. The sequence is that of Xanthine-guanine phosphoribosyltransferase from Enterobacter sp. (strain 638).